The chain runs to 606 residues: UvrABC system protein C (606 aa).

The 80-residue stretch at 14-93 (QNPGVYLMKD…IKKHSPRYNV (80 aa)) folds into the GIY-YIG domain. One can recognise a UVR domain in the interval 203 to 238 (PDLINRLKFEMQTEADLEHFERAAQIRDTILAIQTT).

Belongs to the UvrC family. Interacts with UvrB in an incision complex.

The protein resides in the cytoplasm. In terms of biological role, the UvrABC repair system catalyzes the recognition and processing of DNA lesions. UvrC both incises the 5' and 3' sides of the lesion. The N-terminal half is responsible for the 3' incision and the C-terminal half is responsible for the 5' incision. This chain is UvrABC system protein C, found in Desulforapulum autotrophicum (strain ATCC 43914 / DSM 3382 / VKM B-1955 / HRM2) (Desulfobacterium autotrophicum).